Consider the following 474-residue polypeptide: Glutathione synthetase (474 aa).

Alanine 2 carries the N-acetylalanine modification. Arginine 125 is a binding site for substrate. Position 144 (glutamate 144) interacts with ATP. Glutamate 144 and asparagine 146 together coordinate Mg(2+). Substrate is bound by residues 148–151 (ISAS), 214–216 (ERN), glutamine 220, and 267–270 (RDGY). Residues lysine 305, 364-373 (KPQREGGGNN), tyrosine 375, and 398-401 (MEKT) contribute to the ATP site. Glutamate 368 is a binding site for Mg(2+). Position 415 is a phosphoserine (serine 415). Glutamate 425 is an ATP binding site. Arginine 450 provides a ligand contact to substrate. Residues lysine 452 and aspartate 458 each coordinate ATP. A substrate-binding site is contributed by 461 to 462 (VA).

The protein belongs to the eukaryotic GSH synthase family. As to quaternary structure, homodimer. Mg(2+) is required as a cofactor.

It catalyses the reaction gamma-L-glutamyl-L-cysteine + glycine + ATP = glutathione + ADP + phosphate + H(+). It functions in the pathway sulfur metabolism; glutathione biosynthesis; glutathione from L-cysteine and L-glutamate: step 2/2. Functionally, catalyzes the production of glutathione from gamma-glutamylcysteine and glycine in an ATP-dependent manner. Glutathione (gamma-glutamylcysteinylglycine, GSH) is the most abundant intracellular thiol in living aerobic cells and is required for numerous processes including the protection of cells against oxidative damage, amino acid transport, the detoxification of foreign compounds, the maintenance of protein sulfhydryl groups in a reduced state and acts as a cofactor for a number of enzymes. This is Glutathione synthetase (GSS) from Macaca fascicularis (Crab-eating macaque).